We begin with the raw amino-acid sequence, 183 residues long: Apo-citrate lyase phosphoribosyl-dephospho-CoA transferase (183 aa).

The protein belongs to the CitX family.

It catalyses the reaction apo-[citrate lyase ACP] + 2'-(5''-triphospho-alpha-D-ribosyl)-3'-dephospho-CoA = holo-[citrate lyase ACP] + diphosphate. Functionally, transfers 2-(5''-triphosphoribosyl)-3'-dephosphocoenzyme-A on a serine residue to the apo-acyl carrier protein (gamma chain) of the citrate lyase to yield holo-acyl carrier protein. This Escherichia coli O9:H4 (strain HS) protein is Apo-citrate lyase phosphoribosyl-dephospho-CoA transferase.